We begin with the raw amino-acid sequence, 558 residues long: Outer membrane transporter CdiB (558 aa).

An N-terminal signal peptide occupies residues 1–25 (MFVSSRKTGLIVCFSLIGYTASAFS). Positions 34–62 (NETQQRQSEVIEQSRQQREALQQLNNIVQ) form a coiled coil. Positions 76–151 (FTLREIRFNH…GVLQLEILEG (76 aa)) constitute a POTRA domain.

It belongs to the TPS (TC 1.B.20) family.

The protein resides in the cell outer membrane. Probable outer membrane protein component of a toxin-immunity protein module, which functions as a cellular contact-dependent growth inhibition (CDI) system. CDI modules allow bacteria to communicate with and inhibit the growth of closely related neighboring bacteria in a contact-dependent fashion. This protein may be required for secretion and assembly of the CdiA toxin. In terms of biological role, probable member of a two partner secretion pathway (TPS) in which it mediates the secretion of CdiA. The polypeptide is Outer membrane transporter CdiB (cdiB) (Dickeya dadantii (strain 3937) (Erwinia chrysanthemi (strain 3937))).